The sequence spans 290 residues: Small ribosomal subunit biogenesis GTPase RsgA (290 aa).

In terms of domain architecture, CP-type G spans 61-218 (KSELVRPTVA…IVDTPGFSTL (158 aa)). Residues 110–113 (NKID) and 161–169 (GPSGAGKST) contribute to the GTP site. Zn(2+) is bound by residues Cys243, Cys248, His250, and Cys256.

Belongs to the TRAFAC class YlqF/YawG GTPase family. RsgA subfamily. Monomer. Associates with 30S ribosomal subunit, binds 16S rRNA. Zn(2+) serves as cofactor.

The protein localises to the cytoplasm. Its function is as follows. One of several proteins that assist in the late maturation steps of the functional core of the 30S ribosomal subunit. Helps release RbfA from mature subunits. May play a role in the assembly of ribosomal proteins into the subunit. Circularly permuted GTPase that catalyzes slow GTP hydrolysis, GTPase activity is stimulated by the 30S ribosomal subunit. The sequence is that of Small ribosomal subunit biogenesis GTPase RsgA from Clostridium beijerinckii (strain ATCC 51743 / NCIMB 8052) (Clostridium acetobutylicum).